The chain runs to 194 residues: Flagellar transcriptional regulator FlhC (194 aa).

Residues Cys-139, Cys-142, Cys-159, and Cys-162 each contribute to the Zn(2+) site.

This sequence belongs to the FlhC family. In terms of assembly, heterohexamer composed of two FlhC and four FlhD subunits. Each FlhC binds a FlhD dimer, forming a heterotrimer, and a hexamer assembles by dimerization of two heterotrimers. Zn(2+) is required as a cofactor.

Its subcellular location is the cytoplasm. Functionally, functions in complex with FlhD as a master transcriptional regulator that regulates transcription of several flagellar and non-flagellar operons by binding to their promoter region. Activates expression of class 2 flagellar genes, including fliA, which is a flagellum-specific sigma factor that turns on the class 3 genes. Also regulates genes whose products function in a variety of physiological pathways. The polypeptide is Flagellar transcriptional regulator FlhC (Serratia marcescens).